The primary structure comprises 322 residues: tRNA-specific adenosine deaminase subunit TAD3 (322 aa).

The region spanning glutamate 162–leucine 283 is the CMP/dCMP-type deaminase domain. Zn(2+) contacts are provided by histidine 216, cysteine 254, cysteine 257, and cysteine 322.

Belongs to the cytidine and deoxycytidylate deaminase family. ADAT3 subfamily. Heterodimer with TAD2.

It is found in the cytoplasm. The protein localises to the nucleus. It localises to the peroxisome. Its function is as follows. Structural subunit of tRNA-specific adenosine deaminase, which deaminates adenosine-34 (the first, also called wobble position of the anticodon) to inosine in many tRNAs. Inosine-34 allows the decoding of 3 different nucleotides at the third position of mRNA codons, as inosine is able to pair with U, C, and A. The chain is tRNA-specific adenosine deaminase subunit TAD3 (TAD3) from Saccharomyces cerevisiae (strain ATCC 204508 / S288c) (Baker's yeast).